The chain runs to 172 residues: MAQLKRILGIDPGSRKTGFGIIESGRFHPNYVSSGVIRVEKLTGAQRLKTIFESVCQIIDQYQPHVMAIEKVFVYKNPSSAIKLGQARGVILCAAAIKEIPIMEYTPTQIKSTIVGQGHATKDQVQFMVQNLLKLTESPQEDAADALAGALCHDRYLTLGIDPEKISKGTKF.

Catalysis depends on residues Asp-11, Glu-70, and Asp-142. Mg(2+) contacts are provided by Asp-11, Glu-70, and Asp-142.

This sequence belongs to the RuvC family. Homodimer which binds Holliday junction (HJ) DNA. The HJ becomes 2-fold symmetrical on binding to RuvC with unstacked arms; it has a different conformation from HJ DNA in complex with RuvA. In the full resolvosome a probable DNA-RuvA(4)-RuvB(12)-RuvC(2) complex forms which resolves the HJ. Mg(2+) is required as a cofactor.

It is found in the cytoplasm. The catalysed reaction is Endonucleolytic cleavage at a junction such as a reciprocal single-stranded crossover between two homologous DNA duplexes (Holliday junction).. The RuvA-RuvB-RuvC complex processes Holliday junction (HJ) DNA during genetic recombination and DNA repair. Endonuclease that resolves HJ intermediates. Cleaves cruciform DNA by making single-stranded nicks across the HJ at symmetrical positions within the homologous arms, yielding a 5'-phosphate and a 3'-hydroxyl group; requires a central core of homology in the junction. The consensus cleavage sequence is 5'-(A/T)TT(C/G)-3'. Cleavage occurs on the 3'-side of the TT dinucleotide at the point of strand exchange. HJ branch migration catalyzed by RuvA-RuvB allows RuvC to scan DNA until it finds its consensus sequence, where it cleaves and resolves the cruciform DNA. The protein is Crossover junction endodeoxyribonuclease RuvC of Hydrogenovibrio crunogenus (strain DSM 25203 / XCL-2) (Thiomicrospira crunogena).